Reading from the N-terminus, the 436-residue chain is Tubulin epsilon and delta complex protein 2 (436 aa).

2 disordered regions span residues 53–76 (ARTP…PSSQ) and 94–191 (VRKG…PSSA). Low complexity predominate over residues 111–131 (TSKAATSGAAAASHPRAPSRG). The span at 153-170 (DYPEHRLRSKGDKTHVRT) shows a compositional bias: basic and acidic residues. Phosphoserine is present on Ser161.

Interacts with TEDC1. Found in a complex with TEDC1, TEDC2, TUBE1 and TUBD1.

The protein localises to the cell projection. It localises to the cilium. It is found in the cytoplasm. Its subcellular location is the cytoskeleton. The protein resides in the microtubule organizing center. The protein localises to the centrosome. It localises to the centriole. In terms of biological role, acts as a positive regulator of ciliary hedgehog signaling. Required for centriole stability. This Mus musculus (Mouse) protein is Tubulin epsilon and delta complex protein 2.